The following is a 349-amino-acid chain: GTP 3',8-cyclase (349 aa).

One can recognise a Radical SAM core domain in the interval 24-249 (PFGRAVTYLR…KDMSYRTGGP (226 aa)). Residue R33 coordinates GTP. Residues C40 and C44 each contribute to the [4Fe-4S] cluster site. Y46 contacts S-adenosyl-L-methionine. C47 lines the [4Fe-4S] cluster pocket. Residue R82 coordinates GTP. Residue G86 coordinates S-adenosyl-L-methionine. T116 contacts GTP. Position 140 (S140) interacts with S-adenosyl-L-methionine. A GTP-binding site is contributed by K176. M210 contributes to the S-adenosyl-L-methionine binding site. [4Fe-4S] cluster-binding residues include C273 and C276. 278 to 280 (RVR) contributes to the GTP binding site. Position 290 (C290) interacts with [4Fe-4S] cluster.

Belongs to the radical SAM superfamily. MoaA family. As to quaternary structure, monomer and homodimer. It depends on [4Fe-4S] cluster as a cofactor.

It carries out the reaction GTP + AH2 + S-adenosyl-L-methionine = (8S)-3',8-cyclo-7,8-dihydroguanosine 5'-triphosphate + 5'-deoxyadenosine + L-methionine + A + H(+). The protein operates within cofactor biosynthesis; molybdopterin biosynthesis. Catalyzes the cyclization of GTP to (8S)-3',8-cyclo-7,8-dihydroguanosine 5'-triphosphate. This is GTP 3',8-cyclase from Sinorhizobium medicae (strain WSM419) (Ensifer medicae).